Consider the following 106-residue polypeptide: Movement protein TGB2 (106 aa).

The Cytoplasmic segment spans residues 1-8; the sequence is MPLTPPPD. Residues 9–29 form a helical membrane-spanning segment; the sequence is YTRVYTALAIGASIAFFTGLI. The Lumenal segment spans residues 30–73; sequence TRNTLPSVGDLQHNLPHGGRYRDGTKSVEYCGPRKLNSVESGSR. A helical membrane pass occupies residues 74 to 94; that stretch reads WTFQPWLLVIVLVALIIALGR. Residues 95 to 106 lie on the Cytoplasmic side of the membrane; sequence QGHNCRACGRSH.

It belongs to the Tymovirales TGBp2 protein family.

It is found in the host endoplasmic reticulum membrane. Its function is as follows. Plays a role in viral cell-to-cell propagation, by facilitating genome transport to neighboring plant cells through plasmosdesmata,. The chain is Movement protein TGB2 from Lilium (LSV).